Consider the following 507-residue polypeptide: MDTINRRIRVRFAPSPTGPLHIGGVRTALYNYLFARQHGGDMILRIEDTDSNRFVPGAEAYIIEALEWLGIKFDEGVGYGGRFGPYRQSERRDIYRTYVRQLLDSGRAYIAFDTPEELEARRAEVPNFQYDATTRGQMRNSLTLPAEEVERLVAEGTQYVVRFLVEPNVDVEVNDLIRGRVVIDSSILDDKVLYKSADDLPTYHLANIVDDHLMEVSHVIRGEEWLPSAPLHVLLYRAFGWEDTMPRFAHLALLLKPEGNGKLSKRDGDRLGFPVFPLEWKDPQTGDISKGYRESGYLPEAVVNFLALLGWNPGNDQDVMSMDELIRLFDIEKCSKAGAKFDYEKGRWFNHQYIQRKDNAELAELFRPILRENGVVATDEKTAHVISLVKERVNFIGELWEQAGFFFIAPLSYDEKTVKKRWKEDTAKQLGELAELLDSHRSFAAEATEPTVKNWIETNGYHLGNIMNATRLALVGESKGPHIFDIMEVLGREETVGRIRRAIEILG.

The 'HIGH' region signature appears at 14-24; sequence PSPTGPLHIGG. The 'KMSKS' region signature appears at 262-266; the sequence is KLSKR. Lys-265 contacts ATP.

The protein belongs to the class-I aminoacyl-tRNA synthetase family. Glutamate--tRNA ligase type 1 subfamily. In terms of assembly, monomer.

The protein resides in the cytoplasm. It catalyses the reaction tRNA(Glu) + L-glutamate + ATP = L-glutamyl-tRNA(Glu) + AMP + diphosphate. Catalyzes the attachment of glutamate to tRNA(Glu) in a two-step reaction: glutamate is first activated by ATP to form Glu-AMP and then transferred to the acceptor end of tRNA(Glu). This is Glutamate--tRNA ligase from Porphyromonas gingivalis (strain ATCC 33277 / DSM 20709 / CIP 103683 / JCM 12257 / NCTC 11834 / 2561).